Reading from the N-terminus, the 656-residue chain is Chaperone protein DnaK (656 aa).

2 disordered regions span residues 488-532 (EMQE…DAVD) and 579-656 (YQQQ…DEDE). A compositionally biased stretch (basic and acidic residues) spans 492 to 513 (EAEKHAEEDEKRRERIEARNEA). Residues 523–532 (LLDENEDAVD) are compositionally biased toward acidic residues. Positions 584 to 635 (GEGGAGAGAGAAGGMGGAGPGGMGGAGPGGMGGAGPGGMGGAGPGAGAGQQG) are enriched in gly residues. Residues 636 to 656 (DGEEFVDADFEDVDDEDDEDE) are compositionally biased toward acidic residues.

Belongs to the heat shock protein 70 family.

Its function is as follows. Acts as a chaperone. The sequence is that of Chaperone protein DnaK from Natronomonas pharaonis (strain ATCC 35678 / DSM 2160 / CIP 103997 / JCM 8858 / NBRC 14720 / NCIMB 2260 / Gabara) (Halobacterium pharaonis).